Reading from the N-terminus, the 124-residue chain is Fluoride-specific ion channel FluC (124 aa).

Helical transmembrane passes span 5–25, 32–52, 67–87, and 96–116; these read VYIALLGALGCLCRYFLSGFV, SFPYGTLAVNLIGAFLIGLIM, FAITIGFLGGLTTFSTFSFET, and LLIAIVNVLVSVVACLTCTWI. Gly75 and Thr78 together coordinate Na(+).

The protein belongs to the fluoride channel Fluc/FEX (TC 1.A.43) family.

Its subcellular location is the cell inner membrane. The enzyme catalyses fluoride(in) = fluoride(out). Na(+) is not transported, but it plays an essential structural role and its presence is essential for fluoride channel function. Functionally, fluoride-specific ion channel. Important for reducing fluoride concentration in the cell, thus reducing its toxicity. The chain is Fluoride-specific ion channel FluC from Citrifermentans bemidjiense (strain ATCC BAA-1014 / DSM 16622 / JCM 12645 / Bem) (Geobacter bemidjiensis).